A 532-amino-acid polypeptide reads, in one-letter code: Exopolysaccharide phosphotransferase CpsY (532 aa).

It belongs to the stealth family.

This is Exopolysaccharide phosphotransferase CpsY (cpsY) from Mycobacterium bovis (strain ATCC BAA-935 / AF2122/97).